We begin with the raw amino-acid sequence, 479 residues long: NADH oxidase (479 aa).

FAD contacts are provided by residues 8 to 12 (GVNHA), aspartate 33, cysteine 43, valine 80, 111 to 114 (ASGA), lysine 149, and tyrosine 177. Catalysis depends on histidine 11, which acts as the Proton acceptor. Cysteine 43 serves as the catalytic Redox-active. Cysteine 43 bears the Cysteine sulfinic acid (-SO2H) mark. NAD(+)-binding positions include 170–185 (VAIV…LAEA), aspartate 197, and glycine 264. Residues 295–305 (LNHENVYVIGG), leucine 322, alanine 323, and threonine 324 each bind FAD. Alanine 353 is an NAD(+) binding site. Phenylalanine 450 contacts FAD.

The protein belongs to the class-III pyridine nucleotide-disulfide oxidoreductase family. Requires FAD as cofactor.

The enzyme catalyses 2 NADH + O2 + 2 H(+) = 2 NAD(+) + 2 H2O. In terms of biological role, catalyzes the four-electron reduction of molecular oxygen to water. This Mycoplasma pneumoniae (strain ATCC 29342 / M129 / Subtype 1) (Mycoplasmoides pneumoniae) protein is NADH oxidase (nox).